Here is a 616-residue protein sequence, read N- to C-terminus: Protein phosphatase EYA4 (616 aa).

M1 carries the N-acetylmethionine modification. 3 disordered regions span residues 1-66 (MEDT…VTTN), 186-211 (SQTQSPLQSGCLSYSPGFSTPQPGQT), and 277-345 (ADGT…DSDL). Glycyl lysine isopeptide (Lys-Gly) (interchain with G-Cter in SUMO2) cross-links involve residues K14 and K52. Positions 56 to 66 (SGLSSTSVTTN) are enriched in low complexity. Positions 277–311 (ADGTSSSTSTYQLQESLQGLTSQPGEFDTVQSPST) are enriched in polar residues. The residue at position 338 (S338) is a Phosphoserine. Catalysis depends on D352, which acts as the Nucleophile. Mg(2+)-binding residues include D352, D354, and D580. D354 acts as the Proton donor in catalysis.

Belongs to the HAD-like hydrolase superfamily. EYA family. As to quaternary structure, interacts with SIX3; translocates EYA4 from the cytoplasm to the nucleus and promotes activation of their target genes. Requires Mg(2+) as cofactor. In terms of tissue distribution, in the embryo, expressed mainly in the craniofacial mesenchyme, dermamyotome and limb.

The protein resides in the cytoplasm. Its subcellular location is the nucleus. It catalyses the reaction O-phospho-L-tyrosyl-[protein] + H2O = L-tyrosyl-[protein] + phosphate. Functionally, tyrosine phosphatase that specifically dephosphorylates 'Tyr-142' of histone H2AX (H2AXY142ph). 'Tyr-142' phosphorylation of histone H2AX plays a central role in DNA repair and acts as a mark that distinguishes between apoptotic and repair responses to genotoxic stress. Promotes efficient DNA repair by dephosphorylating H2AX, promoting the recruitment of DNA repair complexes containing MDC1. Its function as histone phosphatase probably explains its role in transcription regulation during organogenesis. May be involved in development of the eye. The polypeptide is Protein phosphatase EYA4 (Eya4) (Mus musculus (Mouse)).